Here is a 328-residue protein sequence, read N- to C-terminus: Beta-ketoacyl-[acyl-carrier-protein] synthase III (328 aa).

Active-site residues include Cys122 and His255. Positions 256-260 are ACP-binding; sequence QANIR. The active site involves Asn285.

Belongs to the thiolase-like superfamily. FabH family. In terms of assembly, homodimer.

The protein localises to the cytoplasm. It catalyses the reaction malonyl-[ACP] + acetyl-CoA + H(+) = 3-oxobutanoyl-[ACP] + CO2 + CoA. Its pathway is lipid metabolism; fatty acid biosynthesis. Its function is as follows. Catalyzes the condensation reaction of fatty acid synthesis by the addition to an acyl acceptor of two carbons from malonyl-ACP. Catalyzes the first condensation reaction which initiates fatty acid synthesis and may therefore play a role in governing the total rate of fatty acid production. Possesses both acetoacetyl-ACP synthase and acetyl transacylase activities. Its substrate specificity determines the biosynthesis of branched-chain and/or straight-chain of fatty acids. The protein is Beta-ketoacyl-[acyl-carrier-protein] synthase III of Polynucleobacter necessarius subsp. necessarius (strain STIR1).